Reading from the N-terminus, the 439-residue chain is Adenylosuccinate synthetase (439 aa).

Residues 13-19 and 41-43 contribute to the GTP site; these read GDEGKGK and GHT. Asp-14 functions as the Proton acceptor in the catalytic mechanism. Mg(2+)-binding residues include Asp-14 and Gly-41. IMP-binding positions include 14–17, 39–42, Thr-130, Arg-144, Gln-226, Thr-241, and Arg-313; these read DEGK and NAGH. The active-site Proton donor is His-42. 309-315 lines the substrate pocket; the sequence is ASTGRQR. GTP is bound by residues Arg-315, 341 to 343, and 422 to 424; these read KLD and STG.

The protein belongs to the adenylosuccinate synthetase family. Homodimer. Mg(2+) serves as cofactor.

The protein localises to the cytoplasm. It carries out the reaction IMP + L-aspartate + GTP = N(6)-(1,2-dicarboxyethyl)-AMP + GDP + phosphate + 2 H(+). The protein operates within purine metabolism; AMP biosynthesis via de novo pathway; AMP from IMP: step 1/2. Plays an important role in the de novo pathway of purine nucleotide biosynthesis. Catalyzes the first committed step in the biosynthesis of AMP from IMP. In Acinetobacter baylyi (strain ATCC 33305 / BD413 / ADP1), this protein is Adenylosuccinate synthetase.